The following is a 202-amino-acid chain: 3-isopropylmalate dehydratase small subunit (202 aa).

This sequence belongs to the LeuD family. LeuD type 1 subfamily. Heterodimer of LeuC and LeuD.

It catalyses the reaction (2R,3S)-3-isopropylmalate = (2S)-2-isopropylmalate. The protein operates within amino-acid biosynthesis; L-leucine biosynthesis; L-leucine from 3-methyl-2-oxobutanoate: step 2/4. Its function is as follows. Catalyzes the isomerization between 2-isopropylmalate and 3-isopropylmalate, via the formation of 2-isopropylmaleate. The protein is 3-isopropylmalate dehydratase small subunit of Paenarthrobacter aurescens (strain TC1).